The primary structure comprises 250 residues: Triosephosphate isomerase (250 aa).

9-11 (NWK) is a binding site for substrate. His96 functions as the Electrophile in the catalytic mechanism. Glu166 serves as the catalytic Proton acceptor. Residues Gly172, Ser212, and 233–234 (GG) contribute to the substrate site.

This sequence belongs to the triosephosphate isomerase family. Homodimer.

It is found in the cytoplasm. The enzyme catalyses D-glyceraldehyde 3-phosphate = dihydroxyacetone phosphate. Its pathway is carbohydrate biosynthesis; gluconeogenesis. It functions in the pathway carbohydrate degradation; glycolysis; D-glyceraldehyde 3-phosphate from glycerone phosphate: step 1/1. Its function is as follows. Involved in the gluconeogenesis. Catalyzes stereospecifically the conversion of dihydroxyacetone phosphate (DHAP) to D-glyceraldehyde-3-phosphate (G3P). This chain is Triosephosphate isomerase, found in Chlorobium phaeobacteroides (strain BS1).